Reading from the N-terminus, the 338-residue chain is Aspartate--ammonia ligase (338 aa).

Belongs to the class-II aminoacyl-tRNA synthetase family. AsnA subfamily.

It is found in the cytoplasm. It carries out the reaction L-aspartate + NH4(+) + ATP = L-asparagine + AMP + diphosphate + H(+). The protein operates within amino-acid biosynthesis; L-asparagine biosynthesis; L-asparagine from L-aspartate (ammonia route): step 1/1. The sequence is that of Aspartate--ammonia ligase from Lactobacillus delbrueckii subsp. bulgaricus (strain ATCC 11842 / DSM 20081 / BCRC 10696 / JCM 1002 / NBRC 13953 / NCIMB 11778 / NCTC 12712 / WDCM 00102 / Lb 14).